We begin with the raw amino-acid sequence, 496 residues long: ADP-dependent glucokinase (496 aa).

Residues 1–22 form the signal peptide; it reads MALWRGSACAGFLALAVGCVFL. In terms of domain architecture, ADPK spans 52–496; that stretch reads SPESRLAAAW…GLFYSEARPD (445 aa). Residues E297, E328, and D481 each coordinate Mg(2+). D481 (proton acceptor) is an active-site residue.

It belongs to the ADP-dependent glucokinase family. In terms of assembly, monomer. Mg(2+) is required as a cofactor.

It localises to the secreted. The catalysed reaction is D-glucose + ADP = D-glucose 6-phosphate + AMP + H(+). Its pathway is carbohydrate degradation; glycolysis. In terms of biological role, catalyzes the phosphorylation of D-glucose to D-glucose 6-phosphate using ADP as the phosphate donor. GDP and CDP can replace ADP, but with reduced efficiency. In Mus musculus (Mouse), this protein is ADP-dependent glucokinase (Adpgk).